A 213-amino-acid chain; its full sequence is Probable thymidylate kinase 2 (213 aa).

10 to 17 contributes to the ATP binding site; the sequence is GIDGSGKS.

The protein belongs to the thymidylate kinase family.

The catalysed reaction is dTMP + ATP = dTDP + ADP. The polypeptide is Probable thymidylate kinase 2 (tmk2) (Saccharolobus solfataricus (strain ATCC 35092 / DSM 1617 / JCM 11322 / P2) (Sulfolobus solfataricus)).